The sequence spans 277 residues: Undecaprenyl-diphosphatase (277 aa).

The next 7 membrane-spanning stretches (helical) occupy residues I3–P23, A44–W64, Q82–G102, L109–A129, A188–L208, A218–I238, and S249–W269.

It belongs to the UppP family.

It localises to the cell inner membrane. The catalysed reaction is di-trans,octa-cis-undecaprenyl diphosphate + H2O = di-trans,octa-cis-undecaprenyl phosphate + phosphate + H(+). Its function is as follows. Catalyzes the dephosphorylation of undecaprenyl diphosphate (UPP). Confers resistance to bacitracin. This is Undecaprenyl-diphosphatase from Polaromonas sp. (strain JS666 / ATCC BAA-500).